Here is a 221-residue protein sequence, read N- to C-terminus: Imidazole glycerol phosphate synthase subunit HisH (221 aa).

The Glutamine amidotransferase type-1 domain occupies 9–221 (DVVIIDTGCA…QILGNFLKMQ (213 aa)). Residue cysteine 84 is the Nucleophile of the active site. Catalysis depends on residues histidine 202 and glutamate 204.

As to quaternary structure, heterodimer of HisH and HisF.

The protein localises to the cytoplasm. It carries out the reaction 5-[(5-phospho-1-deoxy-D-ribulos-1-ylimino)methylamino]-1-(5-phospho-beta-D-ribosyl)imidazole-4-carboxamide + L-glutamine = D-erythro-1-(imidazol-4-yl)glycerol 3-phosphate + 5-amino-1-(5-phospho-beta-D-ribosyl)imidazole-4-carboxamide + L-glutamate + H(+). The catalysed reaction is L-glutamine + H2O = L-glutamate + NH4(+). The protein operates within amino-acid biosynthesis; L-histidine biosynthesis; L-histidine from 5-phospho-alpha-D-ribose 1-diphosphate: step 5/9. IGPS catalyzes the conversion of PRFAR and glutamine to IGP, AICAR and glutamate. The HisH subunit catalyzes the hydrolysis of glutamine to glutamate and ammonia as part of the synthesis of IGP and AICAR. The resulting ammonia molecule is channeled to the active site of HisF. In Shewanella oneidensis (strain ATCC 700550 / JCM 31522 / CIP 106686 / LMG 19005 / NCIMB 14063 / MR-1), this protein is Imidazole glycerol phosphate synthase subunit HisH.